Here is a 220-residue protein sequence, read N- to C-terminus: Iron-sulfur cluster repair protein YtfE (220 aa).

It belongs to the RIC family. YtfE subfamily. As to quaternary structure, homodimer.

It localises to the cytoplasm. In terms of biological role, di-iron-containing protein involved in the repair of iron-sulfur clusters damaged by oxidative and nitrosative stress conditions. The polypeptide is Iron-sulfur cluster repair protein YtfE (Escherichia coli O6:K15:H31 (strain 536 / UPEC)).